The chain runs to 403 residues: S-adenosylmethionine synthase (403 aa).

Residue H16 participates in ATP binding. Mg(2+) is bound at residue D18. E44 contacts K(+). The L-methionine site is built by E57 and Q100. Residues Q100–R110 are flexible loop. Residues Q106–L126 form a disordered region. Residues D176–K178, K248–F249, D257, R263–K264, A280, and K284 each bind ATP. L-methionine is bound at residue D257. Residue K288 coordinates L-methionine.

This sequence belongs to the AdoMet synthase family. Homotetramer; dimer of dimers. The cofactor is Mg(2+). K(+) serves as cofactor.

The protein resides in the cytoplasm. It carries out the reaction L-methionine + ATP + H2O = S-adenosyl-L-methionine + phosphate + diphosphate. Its pathway is amino-acid biosynthesis; S-adenosyl-L-methionine biosynthesis; S-adenosyl-L-methionine from L-methionine: step 1/1. Functionally, catalyzes the formation of S-adenosylmethionine (AdoMet) from methionine and ATP. The overall synthetic reaction is composed of two sequential steps, AdoMet formation and the subsequent tripolyphosphate hydrolysis which occurs prior to release of AdoMet from the enzyme. The chain is S-adenosylmethionine synthase from Clavibacter sepedonicus (Clavibacter michiganensis subsp. sepedonicus).